Here is a 59-residue protein sequence, read N- to C-terminus: Antitoxin Rv0909 (59 aa).

In terms of biological role, antitoxin component of a type II toxin-antitoxin (TA) system. Upon expression in M.smegmatis neutralizes the effect of cognate toxin Rv0910. This Mycobacterium tuberculosis (strain ATCC 25618 / H37Rv) protein is Antitoxin Rv0909.